Consider the following 234-residue polypeptide: Leucyl/phenylalanyl-tRNA--protein transferase (234 aa).

It belongs to the L/F-transferase family.

Its subcellular location is the cytoplasm. The enzyme catalyses N-terminal L-lysyl-[protein] + L-leucyl-tRNA(Leu) = N-terminal L-leucyl-L-lysyl-[protein] + tRNA(Leu) + H(+). It carries out the reaction N-terminal L-arginyl-[protein] + L-leucyl-tRNA(Leu) = N-terminal L-leucyl-L-arginyl-[protein] + tRNA(Leu) + H(+). The catalysed reaction is L-phenylalanyl-tRNA(Phe) + an N-terminal L-alpha-aminoacyl-[protein] = an N-terminal L-phenylalanyl-L-alpha-aminoacyl-[protein] + tRNA(Phe). Functions in the N-end rule pathway of protein degradation where it conjugates Leu, Phe and, less efficiently, Met from aminoacyl-tRNAs to the N-termini of proteins containing an N-terminal arginine or lysine. This is Leucyl/phenylalanyl-tRNA--protein transferase from Salmonella paratyphi A (strain ATCC 9150 / SARB42).